A 24-amino-acid polypeptide reads, in one-letter code: Brevinin-1Bb (24 aa).

Cys18 and Cys24 are joined by a disulfide.

In terms of tissue distribution, expressed by the skin glands.

It is found in the secreted. In terms of biological role, antibacterial activity against Gram-positive bacterium S.aureus and Gram-negative bacterium E.coli. Has activity against C.albicans. This is Brevinin-1Bb from Lithobates berlandieri (Rio Grande leopard frog).